A 265-amino-acid chain; its full sequence is Ribosomal RNA small subunit methyltransferase A (265 aa).

Positions 17, 19, 44, 65, 90, and 112 each coordinate S-adenosyl-L-methionine.

The protein belongs to the class I-like SAM-binding methyltransferase superfamily. rRNA adenine N(6)-methyltransferase family. RsmA subfamily.

It localises to the cytoplasm. It catalyses the reaction adenosine(1518)/adenosine(1519) in 16S rRNA + 4 S-adenosyl-L-methionine = N(6)-dimethyladenosine(1518)/N(6)-dimethyladenosine(1519) in 16S rRNA + 4 S-adenosyl-L-homocysteine + 4 H(+). Specifically dimethylates two adjacent adenosines (A1518 and A1519) in the loop of a conserved hairpin near the 3'-end of 16S rRNA in the 30S particle. May play a critical role in biogenesis of 30S subunits. This Xylella fastidiosa (strain Temecula1 / ATCC 700964) protein is Ribosomal RNA small subunit methyltransferase A.